The following is a 259-amino-acid chain: TLC domain-containing protein 4 (259 aa).

The next 6 membrane-spanning stretches (helical) occupy residues 6 to 26 (FISY…FSII), 53 to 73 (CVST…LAYD), 86 to 106 (FWVK…LLLL), 117 to 133 (YMVC…GYVL), 172 to 192 (PVLL…IAVI), and 213 to 233 (IGPQ…NVFW). Positions 44–246 (GKQCEWDSRC…IARGFYKVVK (203 aa)) constitute a TLC domain.

It belongs to the TLCD4 family.

It is found in the membrane. The protein is TLC domain-containing protein 4 (tlcd4) of Xenopus tropicalis (Western clawed frog).